The sequence spans 285 residues: Neuralized-like protein 2 (285 aa).

A disordered region spans residues 1–28; it reads MADPSEHVGLGGPRSPARPEPPPTRFHQ. In terms of domain architecture, NHR spans 23–244; the sequence is PTRFHQVHGA…STKSVRLVQL (222 aa). An SOCS box domain is found at 250–285; it reads SLQTLCRLVIHKRVVHRLAIDVLHLPKGLKDFCKYE.

In terms of assembly, probable component the ECS(NEURL2) E3 ubiquitin-protein ligase complex consisting of ELOB/Elongin B, ELOC/Elongin C, CUL5, RBX1 and NEURL2. Interacts with CTNNB1. In terms of tissue distribution, expressed specifically in skeletal and cardiac muscles.

It is found in the cytoplasm. It functions in the pathway protein modification; protein ubiquitination. Functionally, plays an important role in the process of myofiber differentiation and maturation. Probable substrate-recognition component of a SCF-like ECS (Elongin BC-CUL2/5-SOCS-box protein) E3 ubiquitin-protein ligase complex, which mediates the ubiquitination of proteins. Probably contributes to catalysis through recognition and positioning of the substrate and the ubiquitin-conjugating enzyme. During myogenesis, controls the ubiquitination and degradation of the specific pool of CTNNB1/beta-catenin located at the sarcolemma. The chain is Neuralized-like protein 2 (Neurl2) from Mus musculus (Mouse).